Here is a 209-residue protein sequence, read N- to C-terminus: Egg case collagen (209 aa).

The nonhelical region stretch occupies residues V1–V129. The interval L130–V209 is triple-helical region. The tract at residues P138–V209 is disordered. Over residues G142 to G162 the composition is skewed to gly residues.

In terms of biological role, major component of the egg case wall which is secreted by the oviduct. The egg case combines mechanical strength and toughness with high permeability to small molecules and ions. This chain is Egg case collagen, found in Scyliorhinus canicula (Small-spotted catshark).